The chain runs to 125 residues: Small ribosomal subunit protein uS13 (125 aa).

Positions 97–125 are disordered; that stretch reads PLRGQRTKTNARTRKGKRKTVANKKMASK.

Belongs to the universal ribosomal protein uS13 family. Part of the 30S ribosomal subunit. Forms a loose heterodimer with protein S19. Forms two bridges to the 50S subunit in the 70S ribosome.

Its function is as follows. Located at the top of the head of the 30S subunit, it contacts several helices of the 16S rRNA. In the 70S ribosome it contacts the 23S rRNA (bridge B1a) and protein L5 of the 50S subunit (bridge B1b), connecting the 2 subunits; these bridges are implicated in subunit movement. Contacts the tRNAs in the A and P-sites. The sequence is that of Small ribosomal subunit protein uS13 from Borrelia hermsii (strain HS1 / DAH).